A 240-amino-acid chain; its full sequence is MKILLIGYGAMNQRVARLAEEKGHEIVGVIEPTPRATTPYQQYQHIADVKDADVAIDFSNPNLLFPLLDEEFHLPLVVATTGEKEKLLNKLDELSQNMPVFFSANMSYGVHALTKILAAAVPLLDDFDIELTEAHHNKKVDAPSGTLEKLYDVIVSLKENVTPVYDRHELNEKRQPQDIGIHSIRGGTIVGEHEVLFAGTDETIQITHRAQSKDIFANGAIQAAERLVNKPNGFYTFDNL.

NAD(+) is bound by residues 79–81 (ATT) and 103–106 (SANM). His-135 (proton donor/acceptor) is an active-site residue. A (S)-2,3,4,5-tetrahydrodipicolinate-binding site is contributed by His-136. Residue Lys-139 is the Proton donor of the active site. 145–146 (GT) contributes to the (S)-2,3,4,5-tetrahydrodipicolinate binding site.

The protein belongs to the DapB family.

The protein localises to the cytoplasm. The enzyme catalyses (S)-2,3,4,5-tetrahydrodipicolinate + NAD(+) + H2O = (2S,4S)-4-hydroxy-2,3,4,5-tetrahydrodipicolinate + NADH + H(+). It carries out the reaction (S)-2,3,4,5-tetrahydrodipicolinate + NADP(+) + H2O = (2S,4S)-4-hydroxy-2,3,4,5-tetrahydrodipicolinate + NADPH + H(+). Its pathway is amino-acid biosynthesis; L-lysine biosynthesis via DAP pathway; (S)-tetrahydrodipicolinate from L-aspartate: step 4/4. Catalyzes the conversion of 4-hydroxy-tetrahydrodipicolinate (HTPA) to tetrahydrodipicolinate. This Staphylococcus aureus (strain bovine RF122 / ET3-1) protein is 4-hydroxy-tetrahydrodipicolinate reductase.